We begin with the raw amino-acid sequence, 688 residues long: PTS system glucoside-specific EIICBA component (688 aa).

Residues 3-427 (KKLFGQLQRI…FKLKTPGRED (425 aa)) enclose the PTS EIIC type-1 domain. The next 10 membrane-spanning stretches (helical) occupy residues 12-32 (IGKALMLPVAILPAAGILLAF), 81-101 (LGLAGGDGVAALAALVGYLIM), 137-157 (LVLGIPTLQTGVFGGIIMGAL), 182-202 (FVPIVTSVVAIATGVLLSFAW), 223-243 (LTTFIFGIIERSLIPFGLHHI), 284-304 (AFTTGKYPFMMFGLPAAAFAI), 315-335 (VVGGLMLSAGLTAFLTGITEP), 340-360 (FLFVAPVLYGIHVLLAGTSFL), 364-384 (LLGVKIGMTFSGGFIDYILYG), and 395-415 (LVIPVGIVYAIVYYFLFDFAI). Residues 438 to 519 (AKLPFDVLDA…AKIMSGEITK (82 aa)) enclose the PTS EIIB type-1 domain. Cys-460 serves as the catalytic Phosphocysteine intermediate; for EIIB activity. Residues 560-664 (DQVFAGKMMG…SIVTPMIITN (105 aa)) enclose the PTS EIIA type-1 domain. His-612 functions as the Tele-phosphohistidine intermediate; for EIIA activity in the catalytic mechanism.

The protein resides in the cell membrane. Its function is as follows. The phosphoenolpyruvate-dependent sugar phosphotransferase system (sugar PTS), a major carbohydrate active -transport system, catalyzes the phosphorylation of incoming sugar substrates concomitantly with their translocation across the cell membrane. This system is involved in alpha- and beta-glucoside transport. This Staphylococcus aureus (strain USA300) protein is PTS system glucoside-specific EIICBA component (glcB).